The following is a 478-amino-acid chain: Zinc metalloproteinase/disintegrin (478 aa).

An N-terminal signal peptide occupies residues Met-1–Ser-20. A propeptide spanning residues Ile-21–Leu-187 is cleaved from the precursor. Disulfide bonds link Cys-304/Cys-384, Cys-344/Cys-368, and Cys-346/Cys-351. His-329 contacts Zn(2+). Glu-330 is an active-site residue. Zn(2+)-binding residues include His-333 and His-339. Residues Leu-390–Leu-405 constitute a propeptide that is removed on maturation. In terms of domain architecture, Disintegrin spans Thr-397–Ala-478. 6 disulfide bridges follow: Cys-411-Cys-426, Cys-413-Cys-421, Cys-420-Cys-443, Cys-434-Cys-440, Cys-439-Cys-464, and Cys-452-Cys-471. The Cell attachment site signature appears at Arg-456–Asp-458.

The protein belongs to the venom metalloproteinase (M12B) family. P-II subfamily. P-IIa sub-subfamily. In terms of assembly, monomer. In terms of tissue distribution, expressed by the venom gland.

It is found in the secreted. Binds alpha-5/beta-1 (ITGAV/ITGB1), alpha-V/beta-3 (ITGAV/ITGB3) and alpha-M/beta-2 (ITGAM/ITGB2) integrins. Is a potent inhibitor of platelet aggregation induced by ADP, collagen, and thrombin. Induces neutrophil chemotaxis and inhibits the chemotaxis of human neutrophils toward fMLP, IL-8, and jarastatin itself. Directly activates an integrin-coupled signaling and modulate the MAPK pathway in different ways, leading the neutrophils to express different functional response. Induces Erk-2 translocation to nucleus and a delay of the spontaneous apoptosis of neutrophils. Increases the IL-8 mRNA levels in neutrophils. When injected simultaneously with melanoma cells in mice, jarastatin, flavoridin (FL) and kistrin (KR) significantly reduce tumor lung colonization. Inhibits mouse melanoma B16F10 cell growth in vitro. When it interacts with melanoma cells, it induces actin cytoskeleton rearrangement, increasing actin polymerization and PTK2/FAK1 phosphorylation. Interferes with NF-kappaB translocation in melanoma cells. The sequence is that of Zinc metalloproteinase/disintegrin from Bothrops jararaca (Jararaca).